The primary structure comprises 123 residues: Sterol carrier protein 2 (123 aa).

Residues 16-113 (KEHLSTDAGK…GSLSAAQKFT (98 aa)) enclose the SCP2 domain. A Microbody targeting signal motif is present at residues 121-123 (SKL).

In terms of tissue distribution, expressed in most tissues including seedlings, cotyledons, inflorescence, leaves, stems, roots, siliques and flower buds, with the highest levels in floral tissues and in maturing seeds.

The protein resides in the peroxisome. In terms of biological role, enhances the transfer of lipids between membranes in vitro. Active on phosphatidylcholine (PC), 1-palmitoyl 2-oleoyl phosphatidylcholine (POPC) and ergosterol, and, to a lower extent, dimyristoyl phosphatidic acid, stigmasterol, desmosterol, beta-sitosterol and steryl glucoside. Inactive or poorly active on palmitic acid, stearoyl-coenzyme A, cholesterol, glucosylceramide and ceramide. Required during seeds and seedlings development. The sequence is that of Sterol carrier protein 2 from Arabidopsis thaliana (Mouse-ear cress).